The primary structure comprises 560 residues: Dihydroxy-acid dehydratase (560 aa).

C50 provides a ligand contact to [2Fe-2S] cluster. D82 is a binding site for Mg(2+). Residue C123 participates in [2Fe-2S] cluster binding. Mg(2+) is bound by residues D124 and K125. Position 125 is an N6-carboxylysine (K125). C195 serves as a coordination point for [2Fe-2S] cluster. Residue E447 coordinates Mg(2+). S473 serves as the catalytic Proton acceptor.

The protein belongs to the IlvD/Edd family. In terms of assembly, homodimer. It depends on [2Fe-2S] cluster as a cofactor. The cofactor is Mg(2+).

It catalyses the reaction (2R)-2,3-dihydroxy-3-methylbutanoate = 3-methyl-2-oxobutanoate + H2O. The catalysed reaction is (2R,3R)-2,3-dihydroxy-3-methylpentanoate = (S)-3-methyl-2-oxopentanoate + H2O. Its pathway is amino-acid biosynthesis; L-isoleucine biosynthesis; L-isoleucine from 2-oxobutanoate: step 3/4. It participates in amino-acid biosynthesis; L-valine biosynthesis; L-valine from pyruvate: step 3/4. Functions in the biosynthesis of branched-chain amino acids. Catalyzes the dehydration of (2R,3R)-2,3-dihydroxy-3-methylpentanoate (2,3-dihydroxy-3-methylvalerate) into 2-oxo-3-methylpentanoate (2-oxo-3-methylvalerate) and of (2R)-2,3-dihydroxy-3-methylbutanoate (2,3-dihydroxyisovalerate) into 2-oxo-3-methylbutanoate (2-oxoisovalerate), the penultimate precursor to L-isoleucine and L-valine, respectively. This Thermosynechococcus vestitus (strain NIES-2133 / IAM M-273 / BP-1) protein is Dihydroxy-acid dehydratase.